Consider the following 104-residue polypeptide: Iron-sulfur cluster assembly protein CyaY (104 aa).

This sequence belongs to the frataxin family.

Its function is as follows. Involved in iron-sulfur (Fe-S) cluster assembly. May act as a regulator of Fe-S biogenesis. The sequence is that of Iron-sulfur cluster assembly protein CyaY from Vibrio atlanticus (strain LGP32) (Vibrio splendidus (strain Mel32)).